A 373-amino-acid polypeptide reads, in one-letter code: 3 beta-hydroxysteroid dehydrogenase/Delta 5--&gt;4-isomerase type 6 (373 aa).

The active-site Proton acceptor is tyrosine 155. Lysine 159 provides a ligand contact to NAD(+). The chain crosses the membrane as a helical span at residues 288–308; it reads VPLLYWLAFMLETVSFLLSPI.

It belongs to the 3-beta-HSD family. In terms of tissue distribution, expressed in skin and testis.

It localises to the endoplasmic reticulum membrane. The protein localises to the mitochondrion membrane. It carries out the reaction a 3beta-hydroxy-Delta(5)-steroid + NAD(+) = a 3-oxo-Delta(5)-steroid + NADH + H(+). The catalysed reaction is a 3-oxo-Delta(5)-steroid = a 3-oxo-Delta(4)-steroid. It participates in lipid metabolism; steroid biosynthesis. In terms of biological role, 3-beta-HSD is a bifunctional enzyme, that catalyzes the oxidative conversion of Delta(5)-ene-3-beta-hydroxy steroid, and the oxidative conversion of ketosteroids. The 3-beta-HSD enzymatic system plays a crucial role in the biosynthesis of all classes of hormonal steroids. May be involved in local production of progesterone. This Mus musculus (Mouse) protein is 3 beta-hydroxysteroid dehydrogenase/Delta 5--&gt;4-isomerase type 6 (Hsd3b6).